A 107-amino-acid polypeptide reads, in one-letter code: RNA polymerase II transcriptional coactivator KIWI (107 aa).

The disordered stretch occupies residues 1–40; the sequence is MSSRGKRKDEDVRASDDESETHAPAKKVAKPADDSDQSDD. A compositionally biased stretch (basic and acidic residues) spans 7 to 23; it reads RKDEDVRASDDESETHA.

It belongs to the transcriptional coactivator PC4 family.

The protein resides in the nucleus. In terms of biological role, general coactivator that functions cooperatively with TAFs and mediates functional interactions between upstream activators and the general transcriptional machinery. Binds single-stranded DNA. The chain is RNA polymerase II transcriptional coactivator KIWI (KIWI) from Arabidopsis thaliana (Mouse-ear cress).